Reading from the N-terminus, the 558-residue chain is MSFTRLDKSRKISAPHGTELTTCNWQVEAAKRMLMNNLDDEVAEHPQALVVYGGIGRAARSWECYDKIIETLERLKPDESLLIQSGKPVGVFPTHENAPRVLIANSNLVPEWANWEHFNELDKKGLMMYGQMTAGSWIYIGSQGIVQGTYETFGSVSRQHFNGDAKGKWVLTGGLGGMGGAQPLAATMAGFCMLAVECDESRIDFRLRTGYVDHKATNLDDALKLINDAMAKGEAISVGLLGNAADVYSELQQQGVTPDVVTDQTSAHDPLHGYLPQGWTLEEYKAKQESDATGTVNAAKESMAVQVRAMLHFQKEGAAVLDYGNNIRQMAKDVGVDNAFDFPGFVPAYIRPLFCEGIGPFRWVALSGDPEDIYKTDEKVKELIPDNEHLHNWLDMAKERISFQGLPSRICWIGLKDRARIARAFNDMVKSGELKAPVVIGRDHLDSGSVASPNRETEAMQDGSDAVSDWPLLNALLNTAGGATWVSLHHGGGVGMGYSQHAGVVIVADGTEEADKRLGRVLWNDPGTGVMRHADAGYDIAKNCAREQGLDLPMLDTK.

NAD(+) contacts are provided by residues 53–54 (GG), Gln-131, 177–179 (GMG), Glu-197, Arg-202, 243–244 (NA), 264–268 (QTSAH), 274–275 (YL), and Tyr-323. Cys-411 is an active-site residue. Gly-493 lines the NAD(+) pocket.

The protein belongs to the urocanase family. NAD(+) is required as a cofactor.

Its subcellular location is the cytoplasm. It catalyses the reaction 4-imidazolone-5-propanoate = trans-urocanate + H2O. It participates in amino-acid degradation; L-histidine degradation into L-glutamate; N-formimidoyl-L-glutamate from L-histidine: step 2/3. Functionally, catalyzes the conversion of urocanate to 4-imidazolone-5-propionate. This Idiomarina loihiensis (strain ATCC BAA-735 / DSM 15497 / L2-TR) protein is Urocanate hydratase.